Reading from the N-terminus, the 285-residue chain is MKLKLRWKGHQRFLTRQNSLVGFIWSPLKNTFSKRNSILNNQVCFEAIKYIQRHYFSSQSHHVTYLHQSPLEKLVSNGVVNENGDLTMDSLSHQIYLLHKNRPTLPLKPTNQPTRFASVLMPLVNTSQGASLLLTQRSPNLRSHAGQMCFPGGRVEPSDGSHYYAALRETYEEIGFLPNFFTYLTTFPPLFTRDEKTEIRAYLAFSVQTSLPSLGTGEVKDLFYVPLTSFLNPKHQKISRFRNTDLLYVEFNIDKIPRIWGITAVILNMYLNSICPDALISIPKF.

Residues 114–254 (TRFASVLMPL…DLLYVEFNID (141 aa)) enclose the Nudix hydrolase domain. The short motif at 153–175 (GRVEPSDGSHYYAALRETYEEIG) is the Nudix box element. Residues Glu169 and Glu173 each contribute to the Mg(2+) site.

It belongs to the Nudix hydrolase family. PCD1 subfamily. The cofactor is Mn(2+). It depends on Mg(2+) as a cofactor.

Functionally, probably mediates the hydrolysis of some nucleoside diphosphate derivatives. This is Probable nudix hydrolase C6G9.05 from Schizosaccharomyces pombe (strain 972 / ATCC 24843) (Fission yeast).